The following is a 292-amino-acid chain: Probable xyloglucan endotransglucosylase/hydrolase protein 6 (292 aa).

The first 30 residues, 1–30 (MAKIYSPSFPGTLCLCIFTLLTLMFIRVSA), serve as a signal peptide directing secretion. Positions 31-224 (RPATFVEDFK…WSKAPFYAYY (194 aa)) constitute a GH16 domain. Catalysis depends on E110, which acts as the Nucleophile. The active-site Proton donor is the E114. Xyloglucan is bound at residue E114. A glycan (N-linked (GlcNAc...) asparagine) is linked at N118. Residues 127 to 129 (QTN), 137 to 139 (DRE), 203 to 204 (DW), and G208 each bind xyloglucan. Disulfide bonds link C232-C240 and C277-C290. R282 contributes to the xyloglucan binding site.

Belongs to the glycosyl hydrolase 16 family. XTH group 1 subfamily. Contains at least one intrachain disulfide bond essential for its enzymatic activity.

The protein resides in the secreted. The protein localises to the cell wall. It localises to the extracellular space. Its subcellular location is the apoplast. It catalyses the reaction breaks a beta-(1-&gt;4) bond in the backbone of a xyloglucan and transfers the xyloglucanyl segment on to O-4 of the non-reducing terminal glucose residue of an acceptor, which can be a xyloglucan or an oligosaccharide of xyloglucan.. Catalyzes xyloglucan endohydrolysis (XEH) and/or endotransglycosylation (XET). Cleaves and religates xyloglucan polymers, an essential constituent of the primary cell wall, and thereby participates in cell wall construction of growing tissues. The chain is Probable xyloglucan endotransglucosylase/hydrolase protein 6 (XTH6) from Arabidopsis thaliana (Mouse-ear cress).